We begin with the raw amino-acid sequence, 282 residues long: ATP synthase gamma chain (282 aa).

The protein belongs to the ATPase gamma chain family. As to quaternary structure, F-type ATPases have 2 components, CF(1) - the catalytic core - and CF(0) - the membrane proton channel. CF(1) has five subunits: alpha(3), beta(3), gamma(1), delta(1), epsilon(1). CF(0) has three main subunits: a, b and c.

It is found in the cell membrane. In terms of biological role, produces ATP from ADP in the presence of a proton gradient across the membrane. The gamma chain is believed to be important in regulating ATPase activity and the flow of protons through the CF(0) complex. This Clostridium botulinum (strain Loch Maree / Type A3) protein is ATP synthase gamma chain.